The chain runs to 538 residues: Retinoblastoma-binding protein 5 (538 aa).

WD repeat units follow at residues 22–63 (DCIS…KIIS) and 64–103 (AHIHPVCSLCWSRDGHKLVSASTDNIVSQWDVLSGDCDQR). Lys129 is covalently cross-linked (Glycyl lysine isopeptide (Lys-Gly) (interchain with G-Cter in SUMO2)). WD repeat units follow at residues 148 to 188 (DDDS…LVAS), 196 to 235 (SNTTAIKSIEFARKGSCFLINTADRIIRVYDGREILTCGR), 249 to 291 (VNRT…KILH), and 293 to 331 (TRGELLLDVAWHPVRPIIASISSGVVSIWAQNQVENWSA). Phosphothreonine; by CDK1 is present on Thr252. Residues 330–366 (SAFAPDFKELDENVEYEERESEFDIEDEDKSEPEQTG) are interaction with ASH2L. Residues 344-360 (EYEERESEFDIEDEDKS) are compositionally biased toward acidic residues. Residues 344 to 377 (EYEERESEFDIEDEDKSEPEQTGADAAEDEEVDV) form a disordered region. Residue Ser350 is modified to Phosphoserine. The segment at 371-380 (EDEEVDVTSV) is interaction with WDR5. 2 positions are modified to phosphoserine: Ser388 and Ser389. The tract at residues 408–538 (VEDPEENPYG…TAGGAISELL (131 aa)) is disordered. The segment covering 479–490 (SKKKQAGRPKGS) has biased composition (basic residues). A compositionally biased stretch (basic and acidic residues) spans 491 to 510 (KGKEKDSPFKPKLYKGDRGL). Residue Ser497 is modified to Phosphoserine; by CDK1. Ser525 is modified (phosphoserine).

In terms of assembly, component of the SET1 complex, at least composed of the catalytic subunit (SETD1A or SETD1B), WDR5, WDR82, RBBP5, ASH2L/ASH2, CXXC1/CFP1, HCFC1 and DPY30. Core component of several methyltransferase-containing complexes including MLL1/MLL, MLL2/3 (also named ASCOM complex) and MLL4/WBP7. Each complex is at least composed of ASH2L, RBBP5, WDR5, DPY30, one or more specific histone methyltransferases (KMT2A/MLL1, KMT2D/MLL2, KMT2C/MLL3 and KMT2B/MLL4), and the facultative components PAGR1, BACC1, CHD8, E2F6, HCFC1, HCFC2, HSP70, INO80C, KDM6A, KANSL1, LAS1L, MAX, MCRS1, MEN1, MGA, MYST1/MOF, NCOA6, PAXIP1/PTIP, PELP1, PHF20, PRP31, RING2, RUVB1/TIP49A, RUVB2/TIP49B, SENP3, TAF1, TAF4, TAF6, TAF7, TAF9, TEX10 and alpha- and beta-tubulin. Component of a histone methylation complex composed of at least ZNF335, RBBP5, ASH2L and WDR5; the complex may have histone H3-specific methyltransferase activity, however does not have specificity for 'Lys-4' of histone H3. Interacts with ZNF335. Interacts with ASH2L; the interaction is direct. Interacts with WDR5; the interaction is direct. Components of the ZNF335-RBBP5-ASH2L-WDR5 histone methylation complex may associate with components of a nuclear receptor-mediated transcription complex to form a complex at least composed of ZNF335, HCFC1, CCAR2, EMSY, MKI67, RBBP5, ASH2L and WDR5. Within this complex interacts with EMSY. Found in a complex with RBBP5, ASH2L, DPY30, KMT2A, KMT2D and WDR5. Interacts with SETD1A. Interacts with WDR82. Ubiquitously expressed.

Its subcellular location is the nucleus. Its function is as follows. In embryonic stem (ES) cells, plays a crucial role in the differentiation potential, particularly along the neural lineage, regulating gene induction and H3 'Lys-4' methylation at key developmental loci, including that mediated by retinoic acid. Does not affect ES cell self-renewal. Component or associated component of some histone methyltransferase complexes which regulates transcription through recruitment of those complexes to gene promoters. As part of the MLL1/MLL complex, involved in mono-, di- and trimethylation at 'Lys-4' of histone H3. Histone H3 'Lys-4' methylation represents a specific tag for epigenetic transcriptional activation. In association with ASH2L and WDR5, stimulates the histone methyltransferase activities of KMT2A, KMT2B, KMT2C, KMT2D, SETD1A and SETD1B. This chain is Retinoblastoma-binding protein 5 (RBBP5), found in Homo sapiens (Human).